The following is a 189-amino-acid chain: Threonylcarbamoyl-AMP synthase (189 aa).

A YrdC-like domain is found at 9–189 (ASAQRKLSVY…IDGETGKRLR (181 aa)).

It belongs to the SUA5 family. TsaC subfamily.

It localises to the cytoplasm. It catalyses the reaction L-threonine + hydrogencarbonate + ATP = L-threonylcarbamoyladenylate + diphosphate + H2O. Its function is as follows. Required for the formation of a threonylcarbamoyl group on adenosine at position 37 (t(6)A37) in tRNAs that read codons beginning with adenine. Catalyzes the conversion of L-threonine, HCO(3)(-)/CO(2) and ATP to give threonylcarbamoyl-AMP (TC-AMP) as the acyladenylate intermediate, with the release of diphosphate. The polypeptide is Threonylcarbamoyl-AMP synthase (Neisseria meningitidis serogroup C (strain 053442)).